Reading from the N-terminus, the 311-residue chain is Ribosomal RNA small subunit methyltransferase H (311 aa).

Residues 32–34 (GGH), aspartate 52, phenylalanine 78, aspartate 99, and glutamine 106 contribute to the S-adenosyl-L-methionine site.

The protein belongs to the methyltransferase superfamily. RsmH family.

It is found in the cytoplasm. The enzyme catalyses cytidine(1402) in 16S rRNA + S-adenosyl-L-methionine = N(4)-methylcytidine(1402) in 16S rRNA + S-adenosyl-L-homocysteine + H(+). Specifically methylates the N4 position of cytidine in position 1402 (C1402) of 16S rRNA. The chain is Ribosomal RNA small subunit methyltransferase H from Halothermothrix orenii (strain H 168 / OCM 544 / DSM 9562).